A 294-amino-acid chain; its full sequence is 4-hydroxy-tetrahydrodipicolinate synthase (294 aa).

Residue Thr-47 participates in pyruvate binding. The active-site Proton donor/acceptor is the Tyr-135. The Schiff-base intermediate with substrate role is filled by Lys-163. Thr-205 contributes to the pyruvate binding site.

This sequence belongs to the DapA family. Homotetramer; dimer of dimers.

The protein resides in the cytoplasm. The enzyme catalyses L-aspartate 4-semialdehyde + pyruvate = (2S,4S)-4-hydroxy-2,3,4,5-tetrahydrodipicolinate + H2O + H(+). It functions in the pathway amino-acid biosynthesis; L-lysine biosynthesis via DAP pathway; (S)-tetrahydrodipicolinate from L-aspartate: step 3/4. Catalyzes the condensation of (S)-aspartate-beta-semialdehyde [(S)-ASA] and pyruvate to 4-hydroxy-tetrahydrodipicolinate (HTPA). The chain is 4-hydroxy-tetrahydrodipicolinate synthase from Rickettsia montanensis.